The chain runs to 828 residues: Zinc finger protein 438 (828 aa).

Disordered regions lie at residues 1 to 29, 143 to 173, and 193 to 231; these read MQNS…KGLQ, KSGC…LYKP, and ALTN…PAKQ. Polar residues-rich tracts occupy residues 16-29 and 150-159; these read NIPS…KGLQ and PAQTQMCPQM. 3 C2H2-type zinc fingers span residues 507 to 529, 535 to 557, and 567 to 590; these read HRCH…MNTH, YSCR…MKLH, and MCCE…KEVH. The segment at 680–721 is disordered; it reads EGTFPGSKGTQEELVQHASPDWKRHPERGKPEKVHSSSEESH. The segment covering 689 to 721 has biased composition (basic and acidic residues); it reads TQEELVQHASPDWKRHPERGKPEKVHSSSEESH. A C2H2-type 4 zinc finger spans residues 776–799; sequence FNCLLCAEMLGRKEDLLHHWKHQH.

The protein belongs to the krueppel C2H2-type zinc-finger protein family. In terms of tissue distribution, ubiquitous.

The protein resides in the nucleus. Its function is as follows. Isoform 1 acts as a transcriptional repressor. This chain is Zinc finger protein 438 (ZNF438), found in Homo sapiens (Human).